The following is a 658-amino-acid chain: UvrABC system protein B (658 aa).

A Helicase ATP-binding domain is found at 26-414 (AGLKKGLKHQ…PDVIEQIIRP (389 aa)). ATP is bound at residue 39–46 (GATGTGKT). The Beta-hairpin signature appears at 92–115 (YYDYYQPEAYVPQSDTYIEKDASI). The Helicase C-terminal domain occupies 430–592 (QIDDLMDEIN…ITPKTIKKEI (163 aa)). The 37-residue stretch at 622–658 (DVFIEGMEHEMKEAAKALDFERAAELRDALLEIKAEG) folds into the UVR domain.

Belongs to the UvrB family. In terms of assembly, forms a heterotetramer with UvrA during the search for lesions. Interacts with UvrC in an incision complex.

It is found in the cytoplasm. Functionally, the UvrABC repair system catalyzes the recognition and processing of DNA lesions. A damage recognition complex composed of 2 UvrA and 2 UvrB subunits scans DNA for abnormalities. Upon binding of the UvrA(2)B(2) complex to a putative damaged site, the DNA wraps around one UvrB monomer. DNA wrap is dependent on ATP binding by UvrB and probably causes local melting of the DNA helix, facilitating insertion of UvrB beta-hairpin between the DNA strands. Then UvrB probes one DNA strand for the presence of a lesion. If a lesion is found the UvrA subunits dissociate and the UvrB-DNA preincision complex is formed. This complex is subsequently bound by UvrC and the second UvrB is released. If no lesion is found, the DNA wraps around the other UvrB subunit that will check the other stand for damage. The chain is UvrABC system protein B from Listeria monocytogenes serovar 1/2a (strain ATCC BAA-679 / EGD-e).